The following is a 361-amino-acid chain: Mitogen-activated protein kinase 14 (361 aa).

The Protein kinase domain occupies 25 to 309 (YQNLTPVGSG…AAEALAHSYF (285 aa)). Residues 31-39 (VGSGAYGSV) and Lys54 each bind ATP. Asp151 serves as the catalytic Proton acceptor. Thr181 bears the Phosphothreonine mark. The TXY signature appears at 181–183 (TGY). A Phosphotyrosine modification is found at Tyr183.

Belongs to the protein kinase superfamily. CMGC Ser/Thr protein kinase family. MAP kinase subfamily. It depends on Mg(2+) as a cofactor. Post-translationally, dually phosphorylated on Thr-181 and Tyr-183, which activates the enzyme.

The catalysed reaction is L-seryl-[protein] + ATP = O-phospho-L-seryl-[protein] + ADP + H(+). It carries out the reaction L-threonyl-[protein] + ATP = O-phospho-L-threonyl-[protein] + ADP + H(+). Activated by tyrosine and threonine phosphorylation. Its function is as follows. Serine/threonine kinase which acts as an essential component of the MAP kinase signal transduction pathway. mapk14a is one of the four p38 MAPKs which play an important role in the cascades of cellular responses evoked by extracellular stimuli such as pro-inflammatory cytokines or physical stress leading to direct activation of transcription factors. Accordingly, p38 MAPKs phosphorylate a broad range of proteins and it has been estimated that they may have approximately 200 to 300 substrates each. Some of the targets are downstream kinases which are activated through phosphorylation and further phosphorylate additional targets. MPK2 is activated by upstream MAPKK/MAPKKK and stimulates MAPKAP kinase 2 to phosphorylate small heat shock proteins. Does not phosphorylate myelin basic protein or MAPKAP kinase 1. The chain is Mitogen-activated protein kinase 14 (mapk14) from Xenopus laevis (African clawed frog).